Consider the following 121-residue polypeptide: Heme-degrading monooxygenase (121 aa).

Residues 2–101 (IIVTNTIKVE…EQREDRKGIV (100 aa)) form the ABM domain. Residue Asn-6 participates in Fe cation binding. The tract at residues 76-98 (KSDSFKKAHGRTKDTREQREDRK) is disordered. The segment covering 78 to 98 (DSFKKAHGRTKDTREQREDRK) has biased composition (basic and acidic residues). His-84 serves as a coordination point for heme.

Belongs to the antibiotic biosynthesis monooxygenase family. Heme-degrading monooxygenase IsdG subfamily. Homodimer.

The protein resides in the cytoplasm. The catalysed reaction is heme b + 3 reduced [NADPH--hemoprotein reductase] + 3 O2 = biliverdin IXalpha + CO + Fe(2+) + 3 oxidized [NADPH--hemoprotein reductase] + 3 H2O + H(+). In terms of biological role, allows bacterial pathogens to use the host heme as an iron source. Catalyzes the oxidative degradation of the heme macrocyclic porphyrin ring to the biliverdin in the presence of a suitable electron donor such as ascorbate or NADPH--cytochrome P450 reductase, with subsequent release of free iron. The protein is Heme-degrading monooxygenase of Listeria welshimeri serovar 6b (strain ATCC 35897 / DSM 20650 / CCUG 15529 / CIP 8149 / NCTC 11857 / SLCC 5334 / V8).